Consider the following 763-residue polypeptide: MRFNHFSIVDKNFDEQLAELDQLGFRWSVFWDEKKILKDFLIQSPSDMTDLQATAELDVIEFLKSSIELDWEIFWNIALQLLDFVPNFDFEIGKAFEYAKNSNLPQIEAEMTTENIISAFYYLLCTRRKNGMILVEHWVSEGLLPLDNHYHFFNDKSLATFDSSLLEREVLWVESPVDSEQRGENDLIKIQIIRPKSTEKLPVVMTASPYHLGINDKANDLALHDMNVELEEKASHEIHVEQKLPQKLSAKAKELPIVDKAPYRFTHGWTYSLNDYFLTRGFASIYVAGVGTRSSDGFQTSGDYQQIYSMTAVIDWLNGRARAYTSRKKTHEIKASWANGKVAMTGKSYLGTMAYGAATTGVEGLEVILAEAGISSWYNYYRENGLVRSPGGFPGEDLDVLAALTYSRNLDGADFLKGNAEYEKRLAEMTAALDRKSGDYNQFWHDRNYLINTDKVKADVLIVHGLQDWNVTPEQAYNFWKALPEGHAKHAFLHRGAHIYMNSWQSIDFSETINAYFVAKLLDRDLNLNLPPVILQENSKDQVWTMMNDFGANTQIKLPLGKTAVSFAQFDNHYDDETFKKYSKDFNVFKKDLFENKANEAVIDLELPSMLTINGPVELELRLKLNDTKGFLSAQILDFGQKKRLEDKARVKDFKVLDRGRNFMLDDLVELPLVESPYQLITKGFTNLQNQNLLTVSDLKADEWFTIKFELQPTIYHLEKADKLRVILYSTDFEHTVRDNRKVTYEIDLSQSKLIIPIESVKN.

Active-site charge relay system residues include serine 348, aspartate 468, and histidine 498.

Belongs to the peptidase S15 family. As to quaternary structure, homodimer.

It localises to the cytoplasm. The catalysed reaction is Hydrolyzes Xaa-Pro-|- bonds to release unblocked, N-terminal dipeptides from substrates including Ala-Pro-|-p-nitroanilide and (sequentially) Tyr-Pro-|-Phe-Pro-|-Gly-Pro-|-Ile.. Functionally, removes N-terminal dipeptides sequentially from polypeptides having unsubstituted N-termini provided that the penultimate residue is proline. In Lactococcus lactis subsp. cremoris (strain SK11), this protein is Xaa-Pro dipeptidyl-peptidase.